An 85-amino-acid polypeptide reads, in one-letter code: UPF0297 protein LBA0418 (85 aa).

It belongs to the UPF0297 family.

This chain is UPF0297 protein LBA0418, found in Lactobacillus acidophilus (strain ATCC 700396 / NCK56 / N2 / NCFM).